We begin with the raw amino-acid sequence, 624 residues long: Chaperone protein HtpG (624 aa).

Residues 1–336 (MKGQETRGFQ…SNDLPLNVSR (336 aa)) are a; substrate-binding. The interval 337–552 (EILQDSSITR…NDEMSTQMAK (216 aa)) is b. The c stretch occupies residues 553–624 (LFAAAGQAVP…IRRMNQLLVS (72 aa)).

This sequence belongs to the heat shock protein 90 family. As to quaternary structure, homodimer.

The protein resides in the cytoplasm. Functionally, molecular chaperone. Has ATPase activity. The polypeptide is Chaperone protein HtpG (Cronobacter sakazakii (strain ATCC BAA-894) (Enterobacter sakazakii)).